We begin with the raw amino-acid sequence, 438 residues long: Xylose isomerase (438 aa).

Active-site residues include His100 and Asp103. Positions 231, 267, 270, 295, 306, 308, and 338 each coordinate Mg(2+).

Belongs to the xylose isomerase family. Homotetramer. Requires Mg(2+) as cofactor.

Its subcellular location is the cytoplasm. The enzyme catalyses alpha-D-xylose = alpha-D-xylulofuranose. The polypeptide is Xylose isomerase (Thermoanaerobacter sp. (strain X514)).